Reading from the N-terminus, the 526-residue chain is Peptide chain release factor 3 (526 aa).

Positions 9–277 constitute a tr-type G domain; it reads DKRRTFAIIS…GIVEWAPKPL (269 aa). GTP is bound by residues 18–25, 86–90, and 140–143; these read SHPDAGKT, DTPGH, and NKLD.

Belongs to the TRAFAC class translation factor GTPase superfamily. Classic translation factor GTPase family. PrfC subfamily.

The protein resides in the cytoplasm. In terms of biological role, increases the formation of ribosomal termination complexes and stimulates activities of RF-1 and RF-2. It binds guanine nucleotides and has strong preference for UGA stop codons. It may interact directly with the ribosome. The stimulation of RF-1 and RF-2 is significantly reduced by GTP and GDP, but not by GMP. The protein is Peptide chain release factor 3 of Shewanella baltica (strain OS155 / ATCC BAA-1091).